Reading from the N-terminus, the 280-residue chain is Chlorophyll a-b binding protein CP29 (280 aa).

Residues 1-42 (MVFKFPTPPGTQKKAGTTATKPAPKATTKKVATSTGTRSGGV) are disordered. Val2 carries the N-acetylvaline modification. Thr7 is modified (phosphothreonine; in State 1 and State 2). The segment covering 10 to 37 (GTQKKAGTTATKPAPKATTKKVATSTGT) has biased composition (low complexity). Position 17 is a phosphothreonine; in State 2 (Thr17). Thr33 is modified (phosphothreonine; in State 1 and State 2). Tyr47 serves as a coordination point for chlorophyll b. 2 residues coordinate chlorophyll a: Phe73 and Ser79. Phosphoserine; in State 2 is present on Ser103. Chlorophyll a contacts are provided by Glu137 and His140. The next 2 membrane-spanning stretches (helical) occupy residues 143–163 (WAML…VSWV) and 176–196 (AGLS…ILVG). Residues Ser183, Glu199, and Arg202 each coordinate chlorophyll b. Chlorophyll a contacts are provided by Glu238, His241, Arg243, and Gln255. Residues 244–264 (LAMVSFFGYGVQALSTGEGAL) form a helical membrane-spanning segment.

It belongs to the light-harvesting chlorophyll a/b-binding (LHC) protein family. The LHC complex consists of chlorophyll a-b binding proteins. Binds at least 14 chlorophylls (8 Chl-a and 6 Chl-b) and carotenoids such as lutein and neoxanthin. is required as a cofactor. In terms of processing, reversible phosphorylation plays a role in the State transition process and determines the affinity of LHCII for PSI and PSII.

The protein resides in the plastid. It is found in the chloroplast thylakoid membrane. Functionally, the light-harvesting complex (LHC) functions as a light receptor, it captures and delivers excitation energy to photosystems with which it is closely associated. CP29 facilitates the State 1 to State 2 transition, where State I is induced by excess photosystem I (PSI) light and State 2 is induced by excess photosystem II (PSII) light. The polypeptide is Chlorophyll a-b binding protein CP29 (Chlamydomonas reinhardtii (Chlamydomonas smithii)).